We begin with the raw amino-acid sequence, 292 residues long: Ribosomal RNA small subunit methyltransferase A (292 aa).

The S-adenosyl-L-methionine site is built by Asn-28, Leu-30, Gly-55, Glu-76, Asp-101, and Asn-126.

The protein belongs to the class I-like SAM-binding methyltransferase superfamily. rRNA adenine N(6)-methyltransferase family. RsmA subfamily.

Its subcellular location is the cytoplasm. The enzyme catalyses adenosine(1518)/adenosine(1519) in 16S rRNA + 4 S-adenosyl-L-methionine = N(6)-dimethyladenosine(1518)/N(6)-dimethyladenosine(1519) in 16S rRNA + 4 S-adenosyl-L-homocysteine + 4 H(+). Specifically dimethylates two adjacent adenosines (A1518 and A1519) in the loop of a conserved hairpin near the 3'-end of 16S rRNA in the 30S particle. May play a critical role in biogenesis of 30S subunits. The sequence is that of Ribosomal RNA small subunit methyltransferase A from Bacillus cereus (strain G9842).